A 111-amino-acid chain; its full sequence is Probable 4-amino-4-deoxy-L-arabinose-phosphoundecaprenol flippase subunit ArnE (111 aa).

Residues 1 to 35 (MIWLTLVFASLLSVAGQLCQKQATCFAAVNKRRKH) lie on the Cytoplasmic side of the membrane. A helical transmembrane segment spans residues 36-56 (IVLWLGLALACLGLAMVLWLL). An EamA domain is found at 40–109 (LGLALACLGL…IIGGIVILGS (70 aa)). The Periplasmic portion of the chain corresponds to 57-60 (VLQN). Residues 61-81 (VPVGIAYPMLSLNFVWVTLAA) traverse the membrane as a helical segment. At 82–87 (VKLWHE) the chain is on the cytoplasmic side. A helical transmembrane segment spans residues 88-108 (PVSLRHWCGLAFIIGGIVILG). Over 109–111 (STV) the chain is Periplasmic.

This sequence belongs to the ArnE family. Heterodimer of ArnE and ArnF.

It is found in the cell inner membrane. It participates in bacterial outer membrane biogenesis; lipopolysaccharide biosynthesis. Translocates 4-amino-4-deoxy-L-arabinose-phosphoundecaprenol (alpha-L-Ara4N-phosphoundecaprenol) from the cytoplasmic to the periplasmic side of the inner membrane. The polypeptide is Probable 4-amino-4-deoxy-L-arabinose-phosphoundecaprenol flippase subunit ArnE (Escherichia coli O81 (strain ED1a)).